A 300-amino-acid chain; its full sequence is 33 kDa chaperonin (300 aa).

2 cysteine pairs are disulfide-bonded: cysteine 247–cysteine 249 and cysteine 280–cysteine 283.

Belongs to the HSP33 family. Under oxidizing conditions two disulfide bonds are formed involving the reactive cysteines. Under reducing conditions zinc is bound to the reactive cysteines and the protein is inactive.

The protein localises to the cytoplasm. Its function is as follows. Redox regulated molecular chaperone. Protects both thermally unfolding and oxidatively damaged proteins from irreversible aggregation. Plays an important role in the bacterial defense system toward oxidative stress. The sequence is that of 33 kDa chaperonin from Prochlorococcus marinus (strain MIT 9312).